The following is a 762-amino-acid chain: Transcription factor kpeA (762 aa).

Residues 267–361 (FDHTSHGSQS…PLKPDQRKQA (95 aa)) form a disordered region. A compositionally biased stretch (low complexity) spans 294–312 (KKPSSPTRSTGSSSSTSPP). The segment at residues 370–401 (CLRCKFLKKTCDKGEPCAGCQPSHARLWQVPC) is a DNA-binding region (zn(2)-C6 fungal-type).

It localises to the nucleus. Functionally, transcription factor that regulates conidiation as well as kojic acid production, likely by negatively controlling kojR and kojA expression. The sequence is that of Transcription factor kpeA from Aspergillus oryzae (strain ATCC 42149 / RIB 40) (Yellow koji mold).